Here is a 147-residue protein sequence, read N- to C-terminus: Large ribosomal subunit protein uL15 (147 aa).

Residues 1–59 (MKLYELKPAPGSKKNRKRVGRGESSGHGKTSTRGHKGQWARSGGGVRPGFEGGQMPLTR) are disordered. Positions 42–52 (SGGGVRPGFEG) are enriched in gly residues.

It belongs to the universal ribosomal protein uL15 family. Part of the 50S ribosomal subunit.

In terms of biological role, binds to the 23S rRNA. This Caldicellulosiruptor bescii (strain ATCC BAA-1888 / DSM 6725 / KCTC 15123 / Z-1320) (Anaerocellum thermophilum) protein is Large ribosomal subunit protein uL15.